Here is a 131-residue protein sequence, read N- to C-terminus: Small ribosomal subunit protein uS8 (131 aa).

It belongs to the universal ribosomal protein uS8 family. In terms of assembly, part of the 30S ribosomal subunit. Contacts proteins S5 and S12.

In terms of biological role, one of the primary rRNA binding proteins, it binds directly to 16S rRNA central domain where it helps coordinate assembly of the platform of the 30S subunit. The protein is Small ribosomal subunit protein uS8 of Neorickettsia sennetsu (strain ATCC VR-367 / Miyayama) (Ehrlichia sennetsu).